The chain runs to 299 residues: Phosphatidylserine decarboxylase proenzyme (299 aa).

Residues Asp115, His171, and Ser258 each act as charge relay system; for autoendoproteolytic cleavage activity in the active site. Ser258 acts as the Schiff-base intermediate with substrate; via pyruvic acid; for decarboxylase activity in catalysis. Ser258 carries the pyruvic acid (Ser); by autocatalysis modification.

It belongs to the phosphatidylserine decarboxylase family. PSD-B subfamily. Prokaryotic type II sub-subfamily. Heterodimer of a large membrane-associated beta subunit and a small pyruvoyl-containing alpha subunit. Requires pyruvate as cofactor. Is synthesized initially as an inactive proenzyme. Formation of the active enzyme involves a self-maturation process in which the active site pyruvoyl group is generated from an internal serine residue via an autocatalytic post-translational modification. Two non-identical subunits are generated from the proenzyme in this reaction, and the pyruvate is formed at the N-terminus of the alpha chain, which is derived from the carboxyl end of the proenzyme. The autoendoproteolytic cleavage occurs by a canonical serine protease mechanism, in which the side chain hydroxyl group of the serine supplies its oxygen atom to form the C-terminus of the beta chain, while the remainder of the serine residue undergoes an oxidative deamination to produce ammonia and the pyruvoyl prosthetic group on the alpha chain. During this reaction, the Ser that is part of the protease active site of the proenzyme becomes the pyruvoyl prosthetic group, which constitutes an essential element of the active site of the mature decarboxylase.

The protein localises to the cell membrane. The enzyme catalyses a 1,2-diacyl-sn-glycero-3-phospho-L-serine + H(+) = a 1,2-diacyl-sn-glycero-3-phosphoethanolamine + CO2. It functions in the pathway phospholipid metabolism; phosphatidylethanolamine biosynthesis; phosphatidylethanolamine from CDP-diacylglycerol: step 2/2. Functionally, catalyzes the formation of phosphatidylethanolamine (PtdEtn) from phosphatidylserine (PtdSer). In Chlamydia caviae (strain ATCC VR-813 / DSM 19441 / 03DC25 / GPIC) (Chlamydophila caviae), this protein is Phosphatidylserine decarboxylase proenzyme.